Here is a 354-residue protein sequence, read N- to C-terminus: N-acylethanolamine-hydrolyzing acid amidase (354 aa).

The signal sequence occupies residues 1 to 22 (MRSPGIVLLLLLLLLLPPGAAP). Asparagine 35 and asparagine 104 each carry an N-linked (GlcNAc...) asparagine glycan. Cysteine 123 (nucleophile) is an active-site residue. 3 N-linked (GlcNAc...) asparagine glycosylation sites follow: asparagine 306, asparagine 312, and asparagine 352.

The protein belongs to the acid ceramidase family. In terms of assembly, heterodimer of an alpha and a beta subunit, produced by autocatalytic cleavage. In terms of processing, N-glycosylated. Tunicamycin treatment causes a reduction in specific activity against N-palmitoylethanolamine. Autoproteolytic cleavage at pH 4.5 gives rise to the alpha and beta subunit. Cleavage gives rise to a conformation change that activates the enzyme. The same catalytic Cys residue mediates the autoproteolytic cleavage and subsequent hydrolysis of lipid substrates.

It localises to the lysosome. The protein localises to the membrane. The enzyme catalyses N-hexadecanoylethanolamine + H2O = ethanolamine + hexadecanoate. The catalysed reaction is an N-(long-chain fatty acyl)ethanolamine + H2O = a long-chain fatty acid + ethanolamine. It carries out the reaction N-dodecanoylethanolamine + H2O = dodecanoate + ethanolamine. It catalyses the reaction N-tetradecanoylethanolamine + H2O = tetradecanoate + ethanolamine. The enzyme catalyses an N-acylsphing-4-enine + H2O = sphing-4-enine + a fatty acid. The catalysed reaction is N-hexadecanoylsphing-4-enine + H2O = sphing-4-enine + hexadecanoate. It carries out the reaction N-dodecanoylsphing-4-enine + H2O = dodecanoate + sphing-4-enine. It functions in the pathway lipid metabolism; fatty acid metabolism. Degrades bioactive fatty acid amides to their corresponding acids, with the following preference: N-palmitoylethanolamine &gt; N-myristoylethanolamine &gt; N-stearoylethanolamine &gt; N-oleoylethanolamine &gt; N-linoleoylethanolamine &gt; N-arachidonoylethanolamine. This is N-acylethanolamine-hydrolyzing acid amidase from Cavia porcellus (Guinea pig).